Consider the following 194-residue polypeptide: dITP/XTP pyrophosphatase (194 aa).

Residue 11 to 16 (SHNAGK) coordinates substrate. D70 (proton acceptor) is an active-site residue. Position 70 (D70) interacts with Mg(2+). Residues S71, 149 to 152 (FGYD), K172, and 177 to 178 (HR) each bind substrate.

The protein belongs to the HAM1 NTPase family. As to quaternary structure, homodimer. It depends on Mg(2+) as a cofactor.

The catalysed reaction is XTP + H2O = XMP + diphosphate + H(+). It carries out the reaction dITP + H2O = dIMP + diphosphate + H(+). The enzyme catalyses ITP + H2O = IMP + diphosphate + H(+). Pyrophosphatase that catalyzes the hydrolysis of nucleoside triphosphates to their monophosphate derivatives, with a high preference for the non-canonical purine nucleotides XTP (xanthosine triphosphate), dITP (deoxyinosine triphosphate) and ITP. Seems to function as a house-cleaning enzyme that removes non-canonical purine nucleotides from the nucleotide pool, thus preventing their incorporation into DNA/RNA and avoiding chromosomal lesions. The protein is dITP/XTP pyrophosphatase of Thermosynechococcus vestitus (strain NIES-2133 / IAM M-273 / BP-1).